The following is a 384-amino-acid chain: L-cysteine:1D-myo-inositol 2-amino-2-deoxy-alpha-D-glucopyranoside ligase (384 aa).

Cys16 serves as a coordination point for Zn(2+). L-cysteinyl-5'-AMP-binding positions include 16–19 (CGIT), Thr31, and 54–56 (NVT). The short motif at 18-28 (ITPYDATHLGH) is the 'HIGH' region element. A 'ERGGDP' region motif is present at residues 159–164 (ERGGDP). Position 199 (Trp199) interacts with L-cysteinyl-5'-AMP. Residue Cys203 coordinates Zn(2+). 221-223 (GSD) is an L-cysteinyl-5'-AMP binding site. His228 contributes to the Zn(2+) binding site. Ile255 contributes to the L-cysteinyl-5'-AMP binding site. Positions 261–265 (KMSKS) match the 'KMSKS' region motif.

It belongs to the class-I aminoacyl-tRNA synthetase family. MshC subfamily. Monomer. The cofactor is Zn(2+).

The catalysed reaction is 1D-myo-inositol 2-amino-2-deoxy-alpha-D-glucopyranoside + L-cysteine + ATP = 1D-myo-inositol 2-(L-cysteinylamino)-2-deoxy-alpha-D-glucopyranoside + AMP + diphosphate + H(+). Its function is as follows. Catalyzes the ATP-dependent condensation of GlcN-Ins and L-cysteine to form L-Cys-GlcN-Ins. The sequence is that of L-cysteine:1D-myo-inositol 2-amino-2-deoxy-alpha-D-glucopyranoside ligase from Mycobacterium avium (strain 104).